The following is a 240-amino-acid chain: Probable transcriptional regulatory protein A2cp1_1765 (240 aa).

It belongs to the TACO1 family.

Its subcellular location is the cytoplasm. In Anaeromyxobacter dehalogenans (strain 2CP-1 / ATCC BAA-258), this protein is Probable transcriptional regulatory protein A2cp1_1765.